Reading from the N-terminus, the 115-residue chain is Large ribosomal subunit protein bL20c (115 aa).

It belongs to the bacterial ribosomal protein bL20 family.

The protein localises to the plastid. It localises to the chloroplast. Its function is as follows. Binds directly to 23S ribosomal RNA and is necessary for the in vitro assembly process of the 50S ribosomal subunit. It is not involved in the protein synthesizing functions of that subunit. The protein is Large ribosomal subunit protein bL20c of Nymphaea alba (White water-lily).